The following is an 835-amino-acid chain: MSARFNHLKADAHWQGVWESQGTFQARDDSPKPKSYVLEMFPYPSGRIHMGHVRNYTMGDVLARYRRMKGFEVLHPMGWDAFGMPAENAAMEKKVHPGDWTRANIAAMRDQLKRIGFALDWSRELATCEPDYYGQEQALFLDLYAAGLVYRKESAVNWDPVDMTVLANEQVIDGRGWRSGALVERRKLNQWFLKITDFADDLLDGLDTLDQWPEKVRTMQENWIGKSQGMRFTFVLDAPAGDLTSFDVFTTRPDTMFGASFAAIAADHPIAQALSAGNPALQAFIADCKRTGTAAAEIETAEKKGYDTGLSVVHPLDPDWKLPLFVANFVLMDYGTGAVFGCPAHDQRDLDFARKYALPVKRVVAPSPEEAAAPIGDEAYVGPGRIVNSAFLDGLSVEEAKAAVIARAEAGGWGQGTTVWRLRDWGVSRQRYWGTPIPIIHCEGCGAVPVPHDQLPVVLPEDVAFDIPGNPLDRHPTWKHVDCPSCGKPARRETDTLDTFVDSSWYFIRFASQPSDKPFDRAVAESWMPVGQYIGGVEHAILHLLYARFWTRALERIGRIGVKEPFTGLFTQGMVTHETYKDPAGQWLSPEEVSDGIVVATGAPATVGRIEKMSKSKKNVVDPAPIVEQYGADAVRWFMLSDSPPERDLEWTESGIEGCWRFVNRLWRITDVSEAGDGEDRELDRKLHKAIAGIAADIEALGFNRAVAKIHELSNAIEKAAPSASRAAAARALVRLVAPMVPHLAEEAWARLGEQGLVADAAWPAHDPALLVDDEVTIAVQVNGKLRDTLTAPKGAPKDALERMALESEKITRLLEGAAPRKVIVVPDRLVNIVA.

The 'HIGH' region motif lies at 42 to 52 (PYPSGRIHMGH). Residues 612–616 (KMSKS) carry the 'KMSKS' region motif. ATP is bound at residue Lys615.

The protein belongs to the class-I aminoacyl-tRNA synthetase family.

It is found in the cytoplasm. It carries out the reaction tRNA(Leu) + L-leucine + ATP = L-leucyl-tRNA(Leu) + AMP + diphosphate. The polypeptide is Leucine--tRNA ligase (Rhizorhabdus wittichii (strain DSM 6014 / CCUG 31198 / JCM 15750 / NBRC 105917 / EY 4224 / RW1) (Sphingomonas wittichii)).